Here is a 654-residue protein sequence, read N- to C-terminus: Cysteine-rich receptor-like protein kinase 40 (654 aa).

A signal peptide spans 1–27 (MGKCSALMIFLSSSLLLVLQTLHVVNA). 2 consecutive Gnk2-homologous domains span residues 28–131 (VKCF…NQST) and 143–250 (WPSP…LYSF). The Extracellular portion of the chain corresponds to 28–287 (VKCFGNSFNG…VKKGKSIGYG (260 aa)). N-linked (GlcNAc...) asparagine glycans are attached at residues asparagine 38, asparagine 65, asparagine 128, asparagine 154, asparagine 167, and asparagine 256. A helical membrane pass occupies residues 288-308 (GIIAIVVVFTFINLLVFIGFI). Residues 309 to 654 (KVYARRGKLN…DDVFTELSCR (346 aa)) are Cytoplasmic-facing. Positions 348–619 (FSSENTLGQG…VIIWLGSETI (272 aa)) constitute a Protein kinase domain. ATP is bound by residues 354-362 (LGQGGFGTV) and lysine 376. Tyrosine 421 is subject to Phosphotyrosine. Aspartate 473 functions as the Proton acceptor in the catalytic mechanism. Serine 477 is subject to Phosphoserine. Phosphothreonine is present on threonine 513. Tyrosine 521 is subject to Phosphotyrosine.

The protein belongs to the protein kinase superfamily. Ser/Thr protein kinase family. CRK subfamily.

The protein resides in the membrane. It catalyses the reaction L-seryl-[protein] + ATP = O-phospho-L-seryl-[protein] + ADP + H(+). It carries out the reaction L-threonyl-[protein] + ATP = O-phospho-L-threonyl-[protein] + ADP + H(+). The sequence is that of Cysteine-rich receptor-like protein kinase 40 (CRK40) from Arabidopsis thaliana (Mouse-ear cress).